The sequence spans 392 residues: ATP phosphoribosyltransferase regulatory subunit (392 aa).

The protein belongs to the class-II aminoacyl-tRNA synthetase family. HisZ subfamily. In terms of assembly, heteromultimer composed of HisG and HisZ subunits.

The protein localises to the cytoplasm. Its pathway is amino-acid biosynthesis; L-histidine biosynthesis; L-histidine from 5-phospho-alpha-D-ribose 1-diphosphate: step 1/9. Its function is as follows. Required for the first step of histidine biosynthesis. May allow the feedback regulation of ATP phosphoribosyltransferase activity by histidine. The chain is ATP phosphoribosyltransferase regulatory subunit from Listeria monocytogenes serotype 4b (strain F2365).